A 438-amino-acid chain; its full sequence is GTPase Der (438 aa).

2 consecutive EngA-type G domains span residues 2–164 and 173–343; these read HKVA…PEDD and IRIS…EKWQ. GTP-binding positions include 8–15, 55–59, 116–119, 179–186, 226–230, and 288–291; these read GRPNVGKS, DTGGL, NKID, DTAGI, and NKWD. The KH-like domain occupies 344 to 428; that stretch reads SRIGTSELNR…PVRLKWKEKG (85 aa).

It belongs to the TRAFAC class TrmE-Era-EngA-EngB-Septin-like GTPase superfamily. EngA (Der) GTPase family. As to quaternary structure, associates with the 50S ribosomal subunit.

Functionally, GTPase that plays an essential role in the late steps of ribosome biogenesis. This chain is GTPase Der, found in Deinococcus radiodurans (strain ATCC 13939 / DSM 20539 / JCM 16871 / CCUG 27074 / LMG 4051 / NBRC 15346 / NCIMB 9279 / VKM B-1422 / R1).